The sequence spans 441 residues: Deoxyguanosinetriphosphate triphosphohydrolase-like protein (441 aa).

Positions 59–250 (RLTHSLEVSQ…MELADDTAYA (192 aa)) constitute an HD domain.

This sequence belongs to the dGTPase family. Type 2 subfamily.

The sequence is that of Deoxyguanosinetriphosphate triphosphohydrolase-like protein from Shewanella loihica (strain ATCC BAA-1088 / PV-4).